The following is a 208-amino-acid chain: Large ribosomal subunit protein uL3c (208 aa).

The segment at 129 to 165 (TRGPMTHGSKNHREPGSIGQGSTPGKVHKGKKMAGRL) is disordered.

Belongs to the universal ribosomal protein uL3 family. Part of the 50S ribosomal subunit.

Its subcellular location is the plastid. It is found in the chloroplast. In terms of biological role, one of the primary rRNA binding proteins, it binds directly near the 3'-end of the 23S rRNA, where it nucleates assembly of the 50S subunit. The polypeptide is Large ribosomal subunit protein uL3c (rpl3) (Rhodomonas salina (Cryptomonas salina)).